The chain runs to 274 residues: NAD-dependent protein deacylase (274 aa).

The region spanning 4 to 274 is the Deacetylase sirtuin-type domain; it reads CLLPSSDMDA…GELLPKALAP (271 aa). 29–48 lines the NAD(+) pocket; that stretch reads GAGVSAESGVPTFRGAGGLW. Substrate is bound by residues tyrosine 73 and arginine 76. NAD(+) is bound at residue 111–114; the sequence is QNID. Residue histidine 129 is the Proton acceptor of the active site. Residues cysteine 137, cysteine 140, cysteine 178, and cysteine 183 each coordinate Zn(2+). NAD(+)-binding positions include 220 to 222, 246 to 248, and cysteine 264; these read GTS and NME.

It belongs to the sirtuin family. Class III subfamily. The cofactor is Zn(2+).

The protein localises to the mitochondrion. The catalysed reaction is N(6)-malonyl-L-lysyl-[protein] + NAD(+) + H2O = 2''-O-malonyl-ADP-D-ribose + nicotinamide + L-lysyl-[protein]. The enzyme catalyses N(6)-succinyl-L-lysyl-[protein] + NAD(+) + H2O = 2''-O-succinyl-ADP-D-ribose + nicotinamide + L-lysyl-[protein]. It carries out the reaction N(6)-glutaryl-L-lysyl-[protein] + NAD(+) + H2O = 2''-O-glutaryl-ADP-D-ribose + nicotinamide + L-lysyl-[protein]. Functionally, NAD-dependent lysine demalonylase, desuccinylase and deglutarylase that specifically removes malonyl, succinyl and glutaryl groups on target proteins. Has weak NAD-dependent protein deacetylase activity; however this activity may not be physiologically relevant in vivo. The polypeptide is NAD-dependent protein deacylase (Daphnia pulex (Water flea)).